A 207-amino-acid polypeptide reads, in one-letter code: Dephospho-CoA kinase (207 aa).

Positions 1-11 are enriched in polar residues; the sequence is MTRSPAPSSPT. Positions 1 to 21 are disordered; sequence MTRSPAPSSPTHPRRLGLTGS. The DPCK domain occupies 15-207; the sequence is RLGLTGSIGA…DAALRQLEIT (193 aa). 23–28 is a binding site for ATP; that stretch reads GAGKST.

It belongs to the CoaE family.

The protein resides in the cytoplasm. The enzyme catalyses 3'-dephospho-CoA + ATP = ADP + CoA + H(+). It functions in the pathway cofactor biosynthesis; coenzyme A biosynthesis; CoA from (R)-pantothenate: step 5/5. Functionally, catalyzes the phosphorylation of the 3'-hydroxyl group of dephosphocoenzyme A to form coenzyme A. The chain is Dephospho-CoA kinase from Deinococcus radiodurans (strain ATCC 13939 / DSM 20539 / JCM 16871 / CCUG 27074 / LMG 4051 / NBRC 15346 / NCIMB 9279 / VKM B-1422 / R1).